The following is a 530-amino-acid chain: Cation channel sperm-associated protein 2 (530 aa).

Residues 1-108 (MAAYQQEEQM…LWAGWVLECP (108 aa)) are Cytoplasmic-facing. The helical transmembrane segment at 109–131 (LFKNFIIFLVFLNTIILMVEIEL) threads the bilayer. Residues 132–140 (LESTNTKLW) lie on the Extracellular side of the membrane. A helical transmembrane segment spans residues 141-166 (PLKLTLEVAAWFILLIFILEILLKWL). Topologically, residues 167-175 (SNFSVFWKS) are cytoplasmic. The helical transmembrane segment at 176–200 (AWNVFDFVVTMLSLLPEVVVLVGVT) threads the bilayer. The Extracellular segment spans residues 201-203 (GQS). The helical transmembrane segment at 204–222 (VWLQLLRICRVLRSLKLLA) threads the bilayer. Residues 223–239 (QFRQIQIIILVLVRALK) are Cytoplasmic-facing. Residues 240 to 262 (SMTFLLMLLLIFFYIFAVTGVYV) form a helical membrane-spanning segment. The Extracellular portion of the chain corresponds to 263 to 281 (FSEYTRSPRQDLEYHVFFS). Residues 282 to 294 (DLPNSLVTVFILF) constitute an intramembrane region (helical; Pore-forming). At 295–314 (TLDHWYALLQDVWKVPEVSR) the chain is on the extracellular side. Residues 315 to 341 (IFSSIYFILWLLLGSIIFRSIIVAMMV) traverse the membrane as a helical segment. Topologically, residues 342 to 530 (TNFQNIRKEL…VQALMNLEDK (189 aa)) are cytoplasmic. A disordered region spans residues 378–458 (MSHEALTSSH…TSSSYSSSSE (81 aa)). The segment covering 429 to 440 (KTEETLSKKREY) has biased composition (basic and acidic residues). Over residues 442–458 (SSSCVSSTSSSYSSSSE) the composition is skewed to low complexity.

Belongs to the cation channel sperm-associated (TC 1.A.1.19) family. Component of the CatSper complex or CatSpermasome composed of the core pore-forming members CATSPER1, CATSPER2, CATSPER3 and CATSPER4 as well as auxiliary members CATSPERB, CATSPERG, CATSPERD, CATSPERE, CATSPERZ, C2CD6/CATSPERT, TMEM249, TMEM262 and EFCAB9. HSPA1 may be an additional auxiliary complex member. The core complex members CATSPER1, CATSPER2, CATSPER3 and CATSPER4 form a heterotetrameric channel. The auxiliary CATSPERB, CATSPERG, CATSPERD and CATSPERE subunits form a pavilion-like structure over the pore which stabilizes the complex through interactions with CATSPER4, CATSPER3, CATSPER1 and CATSPER2 respectively. TMEM262/CATSPERH interacts with CATSPERB, further stabilizing the complex. C2CD6/CATSPERT interacts at least with CATSPERD and is required for targeting the CatSper complex in the flagellar membrane. Interacts with Ca(v)3.3/CACNA1I, leading to suppression of T-type calcium channel activity. As to expression, testis-specific.

It localises to the cell projection. It is found in the cilium. The protein localises to the flagellum membrane. It carries out the reaction Ca(2+)(in) = Ca(2+)(out). With respect to regulation, the CatSper calcium channel is indirectly activated by extracellular progesterone and prostaglandins following the sequence: progesterone &gt; PGF1-alpha = PGE1 &gt; PGA1 &gt; PGE2 &gt;&gt; PGD2. The CatSper calcium channel is directly inhibited by endocannabinoid 2-arachidonoylglycerol (2AG). Indirect activation by progesterone takes place via the following mechanism: progesterone binds and activates the acylglycerol lipase ABHD2, which in turn mediates hydrolysis of 2AG inhibitor, relieving inhibition of the CatSper channel. The primary effect of progesterone activation is to shift voltage dependence towards more physiological, negative membrane potentials; it is not mediated by metabotropic receptors and second messengers. Sperm capacitation enhances the effect of progesterone by providing additional negative shift. Also activated by the elevation of intracellular pH. In terms of biological role, pore-forming subunit of the CatSper complex, a sperm-specific voltage-gated calcium channel, that plays a central role in calcium-dependent physiological responses essential for successful fertilization, such as sperm hyperactivation, acrosome reaction and chemotaxis towards the oocyte. This chain is Cation channel sperm-associated protein 2 (CATSPER2), found in Homo sapiens (Human).